Consider the following 327-residue polypeptide: DNA-directed RNA polymerase subunit alpha (327 aa).

The segment at 1–233 is alpha N-terminal domain (alpha-NTD); that stretch reads MVREKVKVST…NLFIPFLHVE (233 aa). The alpha C-terminal domain (alpha-CTD) stretch occupies residues 265–327; it reads KELAFQYIFI…KKILDILEKK (63 aa).

It belongs to the RNA polymerase alpha chain family. As to quaternary structure, in plastids the minimal PEP RNA polymerase catalytic core is composed of four subunits: alpha, beta, beta', and beta''. When a (nuclear-encoded) sigma factor is associated with the core the holoenzyme is formed, which can initiate transcription.

It is found in the plastid. Its subcellular location is the chloroplast. It carries out the reaction RNA(n) + a ribonucleoside 5'-triphosphate = RNA(n+1) + diphosphate. Its function is as follows. DNA-dependent RNA polymerase catalyzes the transcription of DNA into RNA using the four ribonucleoside triphosphates as substrates. This chain is DNA-directed RNA polymerase subunit alpha, found in Olimarabidopsis pumila (Dwarf rocket).